We begin with the raw amino-acid sequence, 979 residues long: MHC class II regulatory factor RFX1 (979 aa).

Disordered regions lie at residues 1–136 (MATQ…QVVQ), 181–227 (QSAA…PTGT), and 370–405 (TSTG…STGG). Pro residues predominate over residues 12 to 44 (APPPSQPPQAPPQAQPQPPPPPPPAAPQPPQPP). Residues 45–73 (TAAATPQPQYVTELQSPQPQAQPPGGQKQ) show a composition bias toward low complexity. Serine 60 carries the post-translational modification Phosphoserine. Residues 81–96 (VPAPSQPTGAPTPSPA) show a composition bias toward pro residues. Residues 114–126 (ETVSEASPGSTAS) show a composition bias toward polar residues. The span at 127 to 136 (QTGVPTQVVQ) shows a compositional bias: low complexity. Polar residues-rich tracts occupy residues 190–203 (GQVS…QQVH) and 209–220 (SPVQANSSSSKT). The segment covering 370–379 (TSTGAGASNS) has biased composition (low complexity). The span at 380 to 405 (SGGGGSGGGGGGGGGGGGGGSGSTGG) shows a compositional bias: gly residues. A DNA-binding region (RFX-type winged-helix) is located at residues 438-513 (TVQWLLDNYE…YHYYGLRIKA (76 aa)). A necessary for dimerization region spans residues 744–979 (FAQTLRRYTS…GLFVQALPSS (236 aa)). Positions 915–960 (SLNPLDPDKDEEEEEEEESEDELPQDISLAAGGESPALGPETLEPP) are disordered. The span at 922 to 938 (DKDEEEEEEEESEDELP) shows a compositional bias: acidic residues. Phosphoserine is present on residues serine 978 and serine 979.

Belongs to the RFX family. In terms of assembly, homodimer; binds DNA as a homodimer. Heterodimer; heterodimerizes with RFX2 and RFX3.

The protein resides in the nucleus. Regulatory factor essential for MHC class II genes expression. Binds to the X boxes of MHC class II genes. Also binds to an inverted repeat (ENH1) required for hepatitis B virus genes expression and to the most upstream element (alpha) of the RPL30 promoter. The protein is MHC class II regulatory factor RFX1 (RFX1) of Homo sapiens (Human).